The sequence spans 319 residues: Putative protein phosphatase 2C 23 (319 aa).

The 242-residue stretch at 73–314 folds into the PPM-type phosphatase domain; sequence AVRMESASCY…DDITVVVACI (242 aa). Residues G102, D235, and D305 each coordinate Mn(2+).

This sequence belongs to the PP2C family. The cofactor is Mg(2+).

The catalysed reaction is O-phospho-L-seryl-[protein] + H2O = L-seryl-[protein] + phosphate. It carries out the reaction O-phospho-L-threonyl-[protein] + H2O = L-threonyl-[protein] + phosphate. This Oryza sativa subsp. japonica (Rice) protein is Putative protein phosphatase 2C 23.